Consider the following 423-residue polypeptide: Glucose-6-phosphate isomerase (423 aa).

Catalysis depends on Glu279, which acts as the Proton donor. Active-site residues include His300 and Lys413.

It belongs to the GPI family.

Its subcellular location is the cytoplasm. The enzyme catalyses alpha-D-glucose 6-phosphate = beta-D-fructose 6-phosphate. Its pathway is carbohydrate biosynthesis; gluconeogenesis. The protein operates within carbohydrate degradation; glycolysis; D-glyceraldehyde 3-phosphate and glycerone phosphate from D-glucose: step 2/4. Its function is as follows. Catalyzes the reversible isomerization of glucose-6-phosphate to fructose-6-phosphate. This Acholeplasma laidlawii (strain PG-8A) protein is Glucose-6-phosphate isomerase.